We begin with the raw amino-acid sequence, 257 residues long: Zinc-finger homeodomain protein 6 (257 aa).

The tract at residues 1–35 is disordered; the sequence is MEFRGHDEPVDEMGVAYGRTPPSSSSSPAASASAG. Low complexity predominate over residues 21–35; it reads PPSSSSSPAASASAG. Residues 45–93 form a ZF-HD dimerization-type; degenerate zinc finger; it reads YHECLRNHAAAMGGHVVDGCGEFMPMPGDAADALKCAACGCHRSFHRKD. Over residues 106–125 the composition is skewed to pro residues; the sequence is PSPPTPRVPLLMPPPQPQPH. Disordered stretches follow at residues 106–182 and 228–257; these read PSPP…TKFT and NNKS…QQQQ. The segment covering 141–155 has biased composition (low complexity); the sequence is YHHTPSGSGGTTTES. The homeobox DNA-binding region spans 174–237; it reads RKRFRTKFTP…NNKSSIGSSS (64 aa). Over residues 242-257 the composition is skewed to low complexity; the sequence is RRQPQEQQSQQQQQQQ.

Homo- and heterodimer with other ZFHD proteins.

The protein resides in the nucleus. Functionally, putative transcription factor. The protein is Zinc-finger homeodomain protein 6 (ZHD6) of Oryza sativa subsp. indica (Rice).